The following is a 3010-amino-acid chain: Genome polyprotein (3010 aa).

At serine 2 the chain carries N-acetylserine; by host. The tract at residues 2–23 is interaction with STAT1; that stretch reads STNPKPQRKTKRNTNRRPQDVK. The interaction with EIF2AK2/PKR stretch occupies residues 2–58; sequence STNPKPQRKTKRNTNRRPQDVKFPGGGQIVGGVYLLPRRGPRLGVRATRKASERSQP. The segment at 2-59 is interaction with DDX3X; sequence STNPKPQRKTKRNTNRRPQDVKFPGGGQIVGGVYLLPRRGPRLGVRATRKASERSQPR. Positions 2 to 75 are disordered; the sequence is STNPKPQRKT…PKARRPEGRA (74 aa). The Cytoplasmic segment spans residues 2–168; that stretch reads STNPKPQRKT…EDGVNYATGN (167 aa). Short sequence motifs (nuclear localization signal) lie at residues 5–13 and 38–43; these read PKPQRKTKR and PRRGPR. The span at 7–16 shows a compositional bias: basic residues; the sequence is PQRKTKRNTN. Low complexity predominate over residues 32-47; that stretch reads GGVYLLPRRGPRLGVR. Serine 53 carries the post-translational modification Phosphoserine; by host. 2 short sequence motifs (nuclear localization signal) span residues 58–64 and 66–71; these read PRGRRQP and PKARRP. Positions 58–68 are enriched in basic residues; sequence PRGRRQPIPKA. Serine 99 carries the post-translational modification Phosphoserine; by host. An important for endoplasmic reticulum and mitochondrial localization region spans residues 112 to 152; that stretch reads PRRRSRNLGKVIDTLTCGFADLMGYIPLVGAPLGGAARALA. Serine 116 carries the post-translational modification Phosphoserine; by host PKA. The interaction with APOA2 stretch occupies residues 122 to 173; sequence VIDTLTCGFADLMGYIPLVGAPLGGAARALAHGVRVLEDGVNYATGNLPGCS. An important for lipid droplets localization region spans residues 164-167; the sequence is YATG. Residues 169 to 189 traverse the membrane as a helical segment; it reads LPGCSFSIFLLALLSCLTIPA. Positions 178–191 are cleaved as a propeptide — ER anchor for the core protein, removed in mature form by host signal peptidase; the sequence is LLALLSCLTIPASA. Topologically, residues 190 to 358 are lumenal; it reads SAYEVRNVSG…AGAHWGVLAG (169 aa). Residues asparagine 196, asparagine 209, asparagine 234, and asparagine 250 are each glycosylated (N-linked (GlcNAc...) asparagine; by host). An important for fusion region spans residues 265 to 296; it reads LVGTAAFCSAMYVGDLCGSIFLVSQLFTFSPR. N-linked (GlcNAc...) asparagine; by host glycosylation occurs at asparagine 305. A helical membrane pass occupies residues 359–379; it reads LAYYSMVGNWAKVLIVALLFA. At 380 to 725 the chain is on the lumenal side; sequence GVDGETHTTG…WEYILLLFLL (346 aa). Residues 385–411 form an HVR1 region; the sequence is THTTGRVAGHTTSGFTSLFSSGASQKI. Asparagine 417, asparagine 423, asparagine 430, and asparagine 448 each carry an N-linked (GlcNAc...) (high mannose) asparagine; by host glycan. Cystine bridges form between cysteine 429/cysteine 552, cysteine 452/cysteine 459, cysteine 486/cysteine 494, and cysteine 503/cysteine 508. The segment at 474–479 is HVR2; it reads YTKPNS. Asparagine 478 is a glycosylation site (N-linked (GlcNAc...) asparagine; by host). Residues 480–493 form a CD81-binding 1 region; it reads SDQRPYCWHYAPRP. Asparagine 532 carries an N-linked (GlcNAc...) (high mannose) asparagine; by host glycan. Asparagine 540 carries N-linked (GlcNAc...) asparagine; by host glycosylation. The interval 544 to 551 is CD81-binding 2; it reads PPQGNWFG. Asparagine 556 is a glycosylation site (N-linked (GlcNAc...) (high mannose) asparagine; by host). Cysteine 564 and cysteine 569 are joined by a disulfide. An N-linked (GlcNAc...) (high mannose) asparagine; by host glycan is attached at asparagine 576. 3 disulfide bridges follow: cysteine 581/cysteine 585, cysteine 597/cysteine 620, and cysteine 607/cysteine 644. N-linked (GlcNAc...) (high mannose) asparagine; by host glycans are attached at residues asparagine 623 and asparagine 645. A disulfide bridge connects residues cysteine 652 and cysteine 677. The interval 660–671 is PKR/eIF2-alpha phosphorylation homology domain (PePHD); the sequence is SELSPLLLSTTE. The chain crosses the membrane as a helical span at residues 726–746; the sequence is LADARVCACLWMMLLIAQAEA. Topologically, residues 747–757 are lumenal; that stretch reads ALENLVVLNAA. The helical transmembrane segment at 758–778 threads the bilayer; the sequence is SVAGAHGILSFLVFFCAAWYI. Residues 779–781 are Cytoplasmic-facing; that stretch reads KGR. The chain crosses the membrane as a helical span at residues 782-803; that stretch reads LAPGAAYAFYGVWPLLLLLLAL. Topologically, residues 804–813 are lumenal; the sequence is PPRAYALDRE. Residues 814-834 form a helical membrane-spanning segment; it reads MAASCGGAVLVGLVFLTLSPY. Residues 835–838 lie on the Cytoplasmic side of the membrane; the sequence is YKVF. A helical transmembrane segment spans residues 839–859; that stretch reads LTRLIWWLQYFITRAEAHMQV. At 860 to 881 the chain is on the lumenal side; that stretch reads WVPPLNVRGGRDAIILLTCAVH. The chain crosses the membrane as a helical span at residues 882-902; that stretch reads PELIFDITKLLLAILGPLMVL. The Peptidase C18 domain maps to 903–1026; the sequence is QAGITRVPYF…SLEGQGWRLL (124 aa). Topologically, residues 903 to 1657 are cytoplasmic; sequence QAGITRVPYF…CMSADLEVVT (755 aa). Residues 904–1206 are protease NS2-3; that stretch reads AGITRVPYFV…PVESMETTMR (303 aa). Cysteine 922 carries the S-palmitoyl cysteine; by host lipid modification. The tract at residues 929–949 is interaction with host SCPS1; that stretch reads AGGHYVQMAFMKLGALTGTYV. Catalysis depends on for protease NS2 activity; shared with dimeric partner residues histidine 952, glutamate 972, and cysteine 993. The Peptidase S29 domain occupies 1027–1208; that stretch reads APITAYSQQT…ESMETTMRSP (182 aa). Catalysis depends on charge relay system; for serine protease NS3 activity residues histidine 1083 and aspartate 1107. The Zn(2+) site is built by cysteine 1123 and cysteine 1125. The active-site Charge relay system; for serine protease NS3 activity is the serine 1165. Zn(2+)-binding residues include cysteine 1171 and histidine 1175. A Helicase ATP-binding domain is found at 1217–1369; sequence PAVPQTFQVA…PNIEEIGLSN (153 aa). 1230 to 1237 serves as a coordination point for ATP; the sequence is APTGSGKS. The Mg(2+) site is built by serine 1237 and glutamate 1317. Residues 1316–1319 carry the DECH box motif; that stretch reads DECH. The segment at 1486–1497 is RNA-binding; sequence QRRGRTGRGRSG. The chain crosses the membrane as a helical span at residues 1658–1678; it reads STWVLVGGVLAALAAYCLTTG. An NS3-binding region spans residues 1679–1690; it reads SVVIVGRIILSG. Over 1679-1805 the chain is Cytoplasmic; the sequence is SVVIVGRIIL…SITSPLTTQN (127 aa). Residues 1806–1824 traverse the membrane as a helical segment; sequence TLLFNILGGWVAAQLAPPS. At 1825 to 1828 the chain is on the lumenal side; that stretch reads AASA. The helical transmembrane segment at 1829–1849 threads the bilayer; that stretch reads FVGAGIAGAAVGSIGLGKVLV. A topological domain (cytoplasmic) is located at residue aspartate 1850. Residues 1851-1871 form a helical membrane-spanning segment; the sequence is ILAGYGAGVAGALVAFKVMSG. Residues 1872–1881 are Lumenal-facing; it reads EVPSTEDLVN. A helical transmembrane segment spans residues 1882 to 1902; sequence LLPAILSPGALVVGVVCAAIL. Residues 1903–1972 are Cytoplasmic-facing; the sequence is RRHVGPGEGA…WINEDCSTPC (70 aa). Residues cysteine 1968 and cysteine 1972 are each lipidated (S-palmitoyl cysteine; by host). Residues 1973–2002 lie within the membrane without spanning it; the sequence is SGSWLRDVWDWICTVLTDFKTWLQSKLLPR. Residues 2003–2989 lie on the Cytoplasmic side of the membrane; the sequence is LPGVPFLSCQ…YHSLSRARPR (987 aa). Positions 2011, 2029, 2031, and 2052 each coordinate Zn(2+). Positions 2120–2208 are FKBP8-binding; that stretch reads EFFTEVDGVR…ASSSASQLSA (89 aa). Residues 2120–2332 are transcriptional activation; it reads EFFTEVDGVR…PIPPPRRKRT (213 aa). The tract at residues 2135–2139 is interaction with non-structural protein 4A; that stretch reads PACKP. Residues 2187–2219 are disordered; sequence KRRLARGSPPSLASSSASQLSAPSLKATCTTHH. Positions 2189 to 2441 are interaction with host SKP2; the sequence is RLARGSPPSL…PCAAEESKLP (253 aa). Phosphoserine; by host; in p56 is present on serine 2194. Low complexity predominate over residues 2194–2211; the sequence is SPPSLASSSASQLSAPSL. Serine 2197, serine 2201, serine 2204, serine 2207, and serine 2210 each carry phosphoserine; by host; in p58. The tract at residues 2210-2249 is ISDR; it reads SLKATCTTHHDSPDADLIEANLLWRQEMGGNITRVESENK. Positions 2210 to 2275 are interaction with EIF2AK2/PKR; it reads SLKATCTTHH…REISVAAEIL (66 aa). An NS4B-binding region spans residues 2249-2306; the sequence is KVVILDSFEPLHAEGDEREISVAAEILRKSRKFPSALPIWARPDYNPPLLESWKDPDY. Residues 2322–2325 carry the SH3-binding motif; that stretch reads PPIP. Positions 2326-2334 match the Nuclear localization signal motif; it reads PPRRKRTVV. A Glycyl lysine isopeptide (Lys-Gly) (interchain with G-Cter in ubiquitin) cross-link involves residue lysine 2350. Residues 2351-2365 show a composition bias toward polar residues; that stretch reads TFGSSGSSAVDSGTA. Residues 2351–2407 are disordered; the sequence is TFGSSGSSAVDSGTATALPDLASDDGDKGSDVESYSSMPPLEGEPGDPDLSDGSWST. A V3 region spans residues 2354–2377; sequence SSGSSAVDSGTATALPDLASDDGD. A phosphoserine; by host mark is found at serine 2448 and serine 2461. The RdRp catalytic domain maps to 2633 to 2751; that stretch reads PMGFSYDTRC…ICESAGTQED (119 aa). Mg(2+) contacts are provided by aspartate 2639, aspartate 2737, and aspartate 2738. Residues 2990 to 3010 form a helical membrane-spanning segment; that stretch reads WFPLCLLLLSVGVGIYLLPNR.

It belongs to the hepacivirus polyprotein family. In terms of assembly, homooligomer. Interacts with E1 (via C-terminus). Interacts with the non-structural protein 5A. Interacts (via N-terminus) with host STAT1 (via SH2 domain); this interaction results in decreased STAT1 phosphorylation and ubiquitin-mediated proteasome-dependent STAT1 degradation, leading to decreased IFN-stimulated gene transcription. Interacts with host STAT3; this interaction constitutively activates STAT3. Interacts with host LTBR receptor. Interacts with host TNFRSF1A receptor and possibly induces apoptosis. Interacts with host HNRPK. Interacts with host YWHAE. Interacts with host UBE3A/E6AP. Interacts with host DDX3X. Interacts with host APOA2. Interacts with host RXRA protein. Interacts with host SP110 isoform 3/Sp110b; this interaction sequesters the transcriptional corepressor SP110 away from the nucleus. Interacts with host CREB3 nuclear transcription protein; this interaction triggers cell transformation. Interacts with host ACY3. Interacts with host C1QR1. Interacts with host RBM24; this interaction, which enhances the interaction of the mature core protein with 5'-UTR, may inhibit viral translation and favor replication. Interacts with host EIF2AK2/PKR; this interaction induces the autophosphorylation of EIF2AK2. Part of the viral assembly initiation complex composed of NS2, E1, E2, NS3, NS4A, NS5A and the mature core protein. Forms a heterodimer with envelope glycoprotein E2. Interacts with mature core protein. Interacts with protease NS2. The heterodimer E1/E2 interacts with host CLDN1; this interaction plays a role in viral entry into host cell. Interacts with host SPSB2 (via C-terminus). Part of the viral assembly initiation complex composed of NS2, E1, E2, NS3, NS4A, NS5A and the mature core protein. Interacts with host NEURL3; this interaction prevents E1 binding to glycoprotein E2. As to quaternary structure, forms a heterodimer with envelope glycoprotein E1. Interacts with host CD81 and SCARB1 receptors; these interactions play a role in viral entry into host cell. Interacts with host EIF2AK2/PKR; this interaction inhibits EIF2AK2 and probably allows the virus to evade the innate immune response. Interacts with host CD209/DC-SIGN and CLEC4M/DC-SIGNR. Interact with host SPCS1; this interaction is essential for viral particle assembly. Interacts with protease NS2. The heterodimer E1/E2 interacts with host CLDN1; this interaction plays a role in viral entry into host cell. Part of the viral assembly initiation complex composed of NS2, E1, E2, NS3, NS4A, NS5A and the mature core protein. Interacts with host SLC3A2/4F2hc; the interaction may facilitate viral entry into host cell. Interacts with human PLSCR1. In terms of assembly, homohexamer. Homoheptamer. Interacts with protease NS2. Homodimer. Interacts with host SPCS1; this interaction is essential for viral particle assembly. Interacts with envelope glycoprotein E1. Interacts with envelope glycoprotein E2. Interacts with viroporin p7. Interacts with serine protease/helicase NS3. Part of the replication complex composed of NS2, NS3, NS4A, NS4B, NS5A and the RNA-directed RNA polymerase embedded in an ER-derived membranous web. Part of the viral assembly initiation complex composed of NS2, E1, E2, NS3, NS4A, NS5A and the mature core protein. As to quaternary structure, interacts with protease NS2. Interacts with non-structural protein 4A; this interaction stabilizes the folding of NS3 serine protease. NS3-NS4A interaction is essential for NS3 activation and allows membrane anchorage of the latter. NS3/NS4A complex also prevents phosphorylation of host IRF3, thus preventing the establishment of dsRNA induced antiviral state. Interacts with host MAVS; this interaction leads to the cleavage and inhibition of host MAVS. Interacts with host TICAM1; this interaction leads to the cleavage and inhibition of host TICAM1. Interacts with host TANK-binding kinase/TBK1; this interaction results in the inhibition of the association between TBK1 and IRF3, which leads to the inhibition of IRF3 activation. Interacts with host RBM24. Part of the replication complex composed of NS2, NS3, NS4A, NS4B, NS5A and the RNA-directed RNA polymerase embedded in an ER-derived membranous web. Part of the viral assembly initiation complex composed of NS2, E1, E2, NS3, NS4A, NS5A and the mature core protein. In terms of assembly, interacts with NS3 serine protease; this interaction stabilizes the folding of NS3 serine protease. NS3-NS4A interaction is essential for NS3 activation and allows membrane anchorage of the latter. Interacts with non-structural protein 5A (via N-terminus). Part of the replication complex composed of NS2, NS3, NS4A, NS4B, NS5A and the RNA-directed RNA polymerase embedded in an ER-derived membranous web. Part of the viral assembly initiation complex composed of NS2, E1, E2, NS3, NS4A, NS5A and the mature core protein. Homomultimer. Interacts with non-structural protein NS5A. Interacts with host PLA2G4C; this interaction likely initiates the recruitment of replication complexes to lipid droplets. Interacts with host STING; this interaction disrupts the interaction between STING and TBK1 thereby suppressing the interferon signaling. Part of the replication complex composed of NS2, NS3, NS4A, NS4B, NS5A and the RNA-directed RNA polymerase embedded in an ER-derived membranous web. As to quaternary structure, monomer. Homodimer; dimerization is required for RNA-binding. Interacts with the mature core protein. Interacts (via N-terminus) with non-structural protein 4A. Interacts with non-structural protein 4B. Interacts (via region D2) with RNA-directed RNA polymerase. Part of the viral assembly initiation complex composed of NS2, E1, E2, NS3, NS4A, NS5A and the mature core protein. Part of the replication complex composed of NS2, NS3, NS4A, NS4B, NS5A and the RNA-directed RNA polymerase embedded in an ER-derived membranous web. Interacts with host GRB2. Interacts with host BIN1. Interacts with host PIK3R1. Interacts with host SRCAP. Interacts with host FKBP8. Interacts (via C-terminus) with host VAPB (via MSP domain). Interacts with host EIF2AK2/PKR; this interaction leads to disruption of EIF2AK2 dimerization by NS5A and probably allows the virus to evade the innate immune response. Interacts (via N-terminus) with host PACSIN2 (via N-terminus); this interaction attenuates protein kinase C alpha-mediated phosphorylation of PACSIN2 by disrupting the interaction between PACSIN2 and PRKCA. Interacts (via N-terminus) with host SRC kinase (via SH2 domain). Interacts with most Src-family kinases. Interacts with host IFI27 and SKP2; promotes the ubiquitin-mediated proteasomal degradation of NS5A. Interacts with host GPS2. Interacts with host TNFRSF21; this interaction allows the modulation by the virus of JNK, p38 MAPK, STAT3, and Akt signaling pathways in a DR6-dependent manner. Interacts (via N-terminus) with host CIDEB (via N-terminus); this interaction seems to regulate the association of HCV particles with APOE. Interacts with host CHKA/Choline Kinase-alpha; CHKA bridges host PI4KA and NS5A and potentiates NS5A-stimulated PI4KA activity, which then facilitates the targeting of the ternary complex to the ER for viral replication. Interacts with host SPSB2 (via C-terminus); this interaction targets NS5A for ubiquitination and degradation. Interacts with host RAB18; this interaction may promote the association of NS5A and other replicase components with lipid droplets. Interacts (via region D2) with host PPIA/CYPA; the interaction stimulates RNA-binding ability of NS5A and is dependent on the peptidyl-prolyl cis-trans isomerase activity of PPIA/CYPA. Interacts with host TRIM14; this interaction induces the degradation of NS5A. In terms of assembly, homooligomer. Interacts with non-structural protein 5A. Interacts with host VAPB. Interacts with host PRK2/PKN2. Interacts with host HNRNPA1 and SEPT6; these interactions facilitate viral replication. Part of the replication complex composed of NS2, NS3, NS4A, NS4B, NS5A and the RNA-directed RNA polymerase. The cofactor is Zn(2+). It depends on Mg(2+) as a cofactor. In terms of processing, specific enzymatic cleavages in vivo yield mature proteins. The structural proteins, core, E1, E2 and p7 are produced by proteolytic processing by host signal peptidases. The core protein precursor is synthesized as a 23 kDa, which is retained in the ER membrane through the hydrophobic signal peptide. Cleavage by the signal peptidase releases the 21 kDa mature core protein. The cleavage of the core protein precursor occurs between aminoacids 176 and 188 but the exact cleavage site is not known. Some degraded forms of the core protein appear as well during the course of infection. The other proteins (p7, NS2, NS3, NS4A, NS4B, NS5A and NS5B) are cleaved by the viral proteases. Autoprocessing between NS2 and NS3 is mediated by the NS2 cysteine protease catalytic domain and regulated by the NS3 N-terminal domain. Phosphorylated by host PKC and PKA. Post-translationally, ubiquitinated; mediated by UBE3A and leading to core protein subsequent proteasomal degradation. In terms of processing, highly N-glycosylated. Palmitoylation is required for NS2/3 autoprocessing and E2 recruitment to membranes. Post-translationally, palmitoylated. This modification may play a role in its polymerization or in protein-protein interactions. In terms of processing, phosphorylated on serines in a basal form termed p56. p58 is a hyperphosphorylated form of p56. p56 and p58 coexist in the cell in roughly equivalent amounts. Hyperphosphorylation is dependent on the presence of NS4A. Host CSNK1A1/CKI-alpha or RPS6KB1 kinases may be responsible for NS5A phosphorylation. Tyrosine phosphorylation is essential for the interaction with host SRC. Post-translationally, the N-terminus is phosphorylated by host PRK2/PKN2.

It is found in the host endoplasmic reticulum membrane. The protein resides in the host mitochondrion membrane. The protein localises to the virion. Its subcellular location is the host cytoplasm. It localises to the host nucleus. It is found in the host lipid droplet. The protein resides in the virion membrane. The protein localises to the host mitochondrion. Its subcellular location is the host cell membrane. It localises to the host perinuclear region. The enzyme catalyses Hydrolysis of four peptide bonds in the viral precursor polyprotein, commonly with Asp or Glu in the P6 position, Cys or Thr in P1 and Ser or Ala in P1'.. The catalysed reaction is a ribonucleoside 5'-triphosphate + H2O = a ribonucleoside 5'-diphosphate + phosphate + H(+). It carries out the reaction ATP + H2O = ADP + phosphate + H(+). It catalyses the reaction RNA(n) + a ribonucleoside 5'-triphosphate = RNA(n+1) + diphosphate. Inhibited by the antiviral drug hexamethylene amiloride. Inhibited by amantadine. Inhibition by amantadine appears to be genotype-dependent. Also inhibited by long-alkyl-chain iminosugar derivatives. Its activity is regulated as follows. Activity is up-regulated by PRK2/PKN2-mediated phosphorylation. In terms of biological role, packages viral RNA to form a viral nucleocapsid, and promotes virion budding. Participates in the viral particle production as a result of its interaction with the non-structural protein 5A. Binds RNA and may function as a RNA chaperone to induce the RNA structural rearrangements taking place during virus replication. Modulates viral translation initiation by interacting with viral IRES and 40S ribosomal subunit. Affects various cell signaling pathways, host immunity and lipid metabolism. Prevents the establishment of cellular antiviral state by blocking the interferon-alpha/beta (IFN-alpha/beta) and IFN-gamma signaling pathways and by blocking the formation of phosphorylated STAT1 and promoting ubiquitin-mediated proteasome-dependent degradation of STAT1. Activates STAT3 leading to cellular transformation. Regulates the activity of cellular genes, including c-myc and c-fos. May repress the promoter of p53, and sequester CREB3 and SP110 isoform 3/Sp110b in the cytoplasm. Represses cell cycle negative regulating factor CDKN1A, thereby interrupting an important check point of normal cell cycle regulation. Targets transcription factors involved in the regulation of inflammatory responses and in the immune response: suppresses TNF-induced NF-kappa-B activation, and activates AP-1. Binds to dendritic cells (DCs) via C1QR1, resulting in down-regulation of T-lymphocytes proliferation. Alters lipid metabolism by interacting with hepatocellular proteins involved in lipid accumulation and storage. Induces up-regulation of FAS promoter activity, and thereby contributes to the increased triglyceride accumulation in hepatocytes (steatosis). Forms a heterodimer with envelope glycoprotein E2, which mediates virus attachment to the host cell, virion internalization through clathrin-dependent endocytosis and fusion with host membrane. Fusion with the host cell is most likely mediated by both E1 and E2, through conformational rearrangements of the heterodimer required for fusion rather than a classical class II fusion mechanism. E1/E2 heterodimer binds host apolipoproteins such as APOB and APOE thereby forming a lipo-viro-particle (LVP). APOE associated to the LVP allows the initial virus attachment to cell surface receptors such as the heparan sulfate proteoglycans (HSPGs), syndecan-1 (SDC1), syndecan-1 (SDC2), the low-density lipoprotein receptor (LDLR) and scavenger receptor class B type I (SCARB1). The cholesterol transfer activity of SCARB1 allows E2 exposure and binding of E2 to SCARB1 and the tetraspanin CD81. E1/E2 heterodimer binding on CD81 activates the epithelial growth factor receptor (EGFR) signaling pathway. Diffusion of the complex E1-E2-EGFR-SCARB1-CD81 to the cell lateral membrane allows further interaction with Claudin 1 (CLDN1) and occludin (OCLN) to finally trigger HCV entry. Its function is as follows. Forms a heterodimer with envelope glycoprotein E1, which mediates virus attachment to the host cell, virion internalization through clathrin-dependent endocytosis and fusion with host membrane. Fusion with the host cell is most likely mediated by both E1 and E2, through conformational rearrangements of the heterodimer required for fusion rather than a classical class II fusion mechanism. The interaction between envelope glycoprotein E2 and host apolipoprotein E/APOE allows the proper assembly, maturation and infectivity of the viral particles. This interaction is probably promoted via the up-regulation of cellular autophagy by the virus. E1/E2 heterodimer binds host apolipoproteins such as APOB and APOE thereby forming a lipo-viro-particle (LVP). APOE associated to the LVP allows the initial virus attachment to cell surface receptors such as the heparan sulfate proteoglycans (HSPGs), syndecan-1 (SDC1), syndecan-1 (SDC2), the low-density lipoprotein receptor (LDLR) and scavenger receptor class B type I (SCARB1). The cholesterol transfer activity of SCARB1 allows E2 exposure and binding of E2 to SCARB1 and the tetraspanin CD81. E1/E2 heterodimer binding on CD81 activates the epithelial growth factor receptor (EGFR) signaling pathway. Diffusion of the complex E1-E2-EGFR-SCARB1-CD81 to the cell lateral membrane allows further interaction with Claudin 1 (CLDN1) and occludin (OCLN) to finally trigger HCV entry. Inhibits host EIF2AK2/PKR activation, preventing the establishment of an antiviral state. Viral ligand for CD209/DC-SIGN and CLEC4M/DC-SIGNR, which are respectively found on dendritic cells (DCs), and on liver sinusoidal endothelial cells and macrophage-like cells of lymph node sinuses. These interactions allow the capture of circulating HCV particles by these cells and subsequent transmission to permissive cells. Capture of circulating HCV particles by these SIGN+ cells may facilitate virus infection of proximal hepatocytes and lymphocyte subpopulations and may be essential for the establishment of persistent infection. Functionally, ion channel protein that acts as a viroporin and plays an essential role in the assembly, envelopment and secretion of viral particles. Regulates the host cell secretory pathway, which induces the intracellular retention of viral glycoproteins and favors assembly of viral particles. Creates a pore in acidic organelles and releases Ca(2+) and H(+) in the cytoplasm of infected cells, leading to a productive viral infection. High levels of cytoplasmic Ca(2+) may trigger membrane trafficking and transport of viral ER-associated proteins to viroplasms, sites of viral genome replication. This ionic imbalance induces the assembly of the inflammasome complex, which triggers the maturation of pro-IL-1beta into IL-1beta through the action of caspase-1. Targets also host mitochondria and induces mitochondrial depolarization. In addition of its role as a viroporin, acts as a lipid raft adhesion factor. In terms of biological role, cysteine protease required for the proteolytic auto-cleavage between the non-structural proteins NS2 and NS3. The N-terminus of NS3 is required for the function of NS2 protease (active region NS2-3). Promotes the initiation of viral particle assembly by mediating the interaction between structural and non-structural proteins. Displays three enzymatic activities: serine protease with a chymotrypsin-like fold, NTPase and RNA helicase. NS3 serine protease, in association with NS4A, is responsible for the cleavages of NS3-NS4A, NS4A-NS4B, NS4B-NS5A and NS5A-NS5B. The NS3/NS4A complex prevents phosphorylation of host IRF3, thus preventing the establishment of dsRNA induced antiviral state. The NS3/NS4A complex induces host amino acid transporter component SLC3A2, thus contributing to HCV propagation. NS3 RNA helicase binds to RNA and unwinds both dsDNA and dsRNA in the 3' to 5' direction, and likely resolves RNA complicated stable secondary structures in the template strand. Binds a single ATP and catalyzes the unzipping of a single base pair of dsRNA. Inhibits host antiviral proteins TBK1 and IRF3 thereby preventing the establishment of an antiviral state. Cleaves host MAVS/CARDIF thereby preventing the establishment of an antiviral state. Cleaves host TICAM1/TRIF, thereby disrupting TLR3 signaling and preventing the establishment of an antiviral state. Its function is as follows. Induces a specific membrane alteration that serves as a scaffold for the virus replication complex. This membrane alteration gives rise to the so-called ER-derived membranous web that contains the replication complex. NS4B self-interaction contributes to its function in membranous web formation. Promotes host TRIF protein degradation in a CASP8-dependent manner thereby inhibiting host TLR3-mediated interferon signaling. Disrupts the interaction between STING and TBK1 contributing to the inhibition of interferon signaling. Functionally, phosphorylated protein that is indispensable for viral replication and assembly. Both hypo- and hyperphosphorylated states are required for the viral life cycle. The hyperphosphorylated form of NS5A is an inhibitor of viral replication. Involved in RNA-binding and especially in binding to the viral genome. Zinc is essential for RNA-binding. Participates in the viral particle production as a result of its interaction with the mature viral core protein. Its interaction with host VAPB may target the viral replication complex to vesicles. Down-regulates viral IRES translation initiation. Mediates interferon resistance, presumably by interacting with and inhibiting host EIF2AK2/PKR. Prevents BIN1-induced apoptosis. Acts as a transcriptional activator of some host genes important for viral replication when localized in the nucleus. Via the interaction with host PACSIN2, modulates lipid droplet formation in order to promote virion assembly. Modulates TNFRSF21/DR6 signaling pathway for viral propagation. In terms of biological role, RNA-dependent RNA polymerase that performs primer-template recognition and RNA synthesis during viral replication. Initiates RNA transcription/replication at a flavin adenine dinucleotide (FAD), resulting in a 5'- FAD cap on viral RNAs. In this way, recognition of viral 5' RNA by host pattern recognition receptors can be bypassed, thereby evading activation of antiviral pathways. The polypeptide is Genome polyprotein (Hepatitis C virus genotype 1b (strain HC-J4) (HCV)).